The following is a 299-amino-acid chain: N-acetylaspartate synthetase (299 aa).

The span at Ala-44 to Gly-57 shows a compositional bias: pro residues. Residues Ala-44–Pro-70 form a disordered region. Residues Pro-60–Pro-70 show a composition bias toward gly residues. A helical transmembrane segment spans residues Tyr-118–Val-138. The N-acetyltransferase domain occupies Leu-143–Ala-280.

The protein belongs to the NAT8 family. Expressed in brain, kidney, liver and spleen. In brain, present in neurons but not in astrocytes (at protein level). Expressed in brain, thymus and spleen.

It localises to the cytoplasm. It is found in the microsome membrane. The protein resides in the mitochondrion membrane. Its subcellular location is the endoplasmic reticulum membrane. The catalysed reaction is L-aspartate + acetyl-CoA = N-acetyl-L-aspartate + CoA + H(+). Aminooxyacetic acid (AOAA) blocks its activity in both cytoplasm and mitochondria. In terms of biological role, catalyzes the synthesis of N-acetylaspartate acid (NAA) from L-aspartate and acetyl-CoA. Promotes dopamine uptake by regulating TNF-alpha expression. Attenuates methamphetamine-induced inhibition of dopamine uptake. The sequence is that of N-acetylaspartate synthetase (Nat8l) from Mus musculus (Mouse).